A 343-amino-acid chain; its full sequence is Dihydroorotase (343 aa).

Residues histidine 14 and histidine 16 each coordinate Zn(2+). Residues 16 to 18 (HLR) and asparagine 42 each bind substrate. Residues lysine 100, histidine 137, and histidine 175 each contribute to the Zn(2+) site. At lysine 100 the chain carries N6-carboxylysine. Histidine 137 lines the substrate pocket. Leucine 220 is a substrate binding site. Zn(2+) is bound at residue aspartate 248. The active site involves aspartate 248. Substrate is bound by residues histidine 252 and alanine 264.

Belongs to the metallo-dependent hydrolases superfamily. DHOase family. Class II DHOase subfamily. As to quaternary structure, homodimer. Zn(2+) serves as cofactor.

The catalysed reaction is (S)-dihydroorotate + H2O = N-carbamoyl-L-aspartate + H(+). The protein operates within pyrimidine metabolism; UMP biosynthesis via de novo pathway; (S)-dihydroorotate from bicarbonate: step 3/3. Its function is as follows. Catalyzes the reversible cyclization of carbamoyl aspartate to dihydroorotate. The sequence is that of Dihydroorotase from Parasynechococcus marenigrum (strain WH8102).